The chain runs to 284 residues: Proteasome subunit beta 1 (284 aa).

The propeptide at 1 to 54 (MAQRDTGGRLGAEFFTPGDSSFTAFLAAHRPALLSTRGLLPDGVRAAPDRVPHG) is removed in mature form; by autocatalysis. Threonine 55 (nucleophile) is an active-site residue. Over residues 256 to 277 (RLPESETEDLSREMVEQRHTRP) the composition is skewed to basic and acidic residues. A disordered region spans residues 256 to 284 (RLPESETEDLSREMVEQRHTRPDGPTAAM).

It belongs to the peptidase T1B family. In terms of assembly, the 20S proteasome core is composed of 14 alpha and 14 beta subunits that assemble into four stacked heptameric rings, resulting in a barrel-shaped structure. The two inner rings, each composed of seven catalytic beta subunits, are sandwiched by two outer rings, each composed of seven alpha subunits. The catalytic chamber with the active sites is on the inside of the barrel. Has a gated structure, the ends of the cylinder being occluded by the N-termini of the alpha-subunits. Is capped by the proteasome-associated ATPase, ARC.

Its subcellular location is the cytoplasm. The enzyme catalyses Cleavage of peptide bonds with very broad specificity.. It participates in protein degradation; proteasomal Pup-dependent pathway. Its activity is regulated as follows. The formation of the proteasomal ATPase ARC-20S proteasome complex, likely via the docking of the C-termini of ARC into the intersubunit pockets in the alpha-rings, may trigger opening of the gate for substrate entry. Interconversion between the open-gate and close-gate conformations leads to a dynamic regulation of the 20S proteasome proteolysis activity. In terms of biological role, component of the proteasome core, a large protease complex with broad specificity involved in protein degradation. This is Proteasome subunit beta 1 from Streptomyces avermitilis (strain ATCC 31267 / DSM 46492 / JCM 5070 / NBRC 14893 / NCIMB 12804 / NRRL 8165 / MA-4680).